The chain runs to 191 residues: Shikimate kinase (191 aa).

Position 14–19 (14–19 (GSGKST)) interacts with ATP. A Mg(2+)-binding site is contributed by S18. Residues D36, R60, and G82 each contribute to the substrate site. R120 contacts ATP. R147 provides a ligand contact to substrate.

Belongs to the shikimate kinase family. In terms of assembly, monomer. Mg(2+) is required as a cofactor.

Its subcellular location is the cytoplasm. It catalyses the reaction shikimate + ATP = 3-phosphoshikimate + ADP + H(+). It functions in the pathway metabolic intermediate biosynthesis; chorismate biosynthesis; chorismate from D-erythrose 4-phosphate and phosphoenolpyruvate: step 5/7. In terms of biological role, catalyzes the specific phosphorylation of the 3-hydroxyl group of shikimic acid using ATP as a cosubstrate. This is Shikimate kinase from Chlorobaculum tepidum (strain ATCC 49652 / DSM 12025 / NBRC 103806 / TLS) (Chlorobium tepidum).